A 241-amino-acid polypeptide reads, in one-letter code: Attacin-C (241 aa).

The signal sequence occupies residues Met-1–Ala-21. Residues Leu-22 to Pro-23 constitute a propeptide that is removed on maturation. At Gln-24 the chain carries Pyrrolidone carboxylic acid. A glycan (O-linked (GalNAc...) threonine) is linked at Thr-39. Phosphoserine is present on Ser-127.

The protein belongs to the attacin/sarcotoxin-2 family. In terms of tissue distribution, hemolymph (at protein level).

Its subcellular location is the secreted. Its function is as follows. Has antimicrobial activity in synergy with other peptides. Strongest activity observed against E.cloacae. This is Attacin-C from Drosophila melanogaster (Fruit fly).